The chain runs to 232 residues: Vesicle transport through interaction with t-SNAREs homolog 1B (232 aa).

Ala-2 is subject to N-acetylalanine. Interaction with CLINT1 stretches follow at residues 2-23 and 69-73; these read AASA…GLLE and APLTF. At 2–208 the chain is on the cytoplasmic side; it reads AASAASSEHF…SRKVITNKLL (207 aa). The stretch at 36–98 forms a coiled coil; it reads AGTEEKKKLV…AKLHREVRST (63 aa). An Omega-N-methylarginine modification is found at Arg-107. The residue at position 138 (Ser-138) is a Phosphoserine. Positions 160-201 form a coiled coil; it reads GTEIIEELGEQRDQLERTKSRLVNTNENLSKSRKILRSMSRK. The chain crosses the membrane as a helical; Anchor for type IV membrane protein span at residues 209-229; it reads LSVIILLELAILVGLVYYKFF. At 230–232 the chain is on the vesicular side; sequence RHH.

The protein belongs to the VTI1 family. Forms a SNARE complex with STX7, STX8 and VAMP8 which functions in the homotypic fusion of late endosomes. Component of the SNARE complex composed of STX7, STX8, VAMP7 and VIT1B that is required for heterotypic fusion of late endosomes with lysosomes. May interact with STX17. Interacts with CLINT1. As to expression, broadly expressed.

Its subcellular location is the early endosome membrane. It is found in the late endosome membrane. The protein resides in the lysosome membrane. The protein localises to the cytoplasmic granule. It localises to the recycling endosome membrane. In terms of biological role, V-SNARE that mediates vesicle transport pathways through interactions with t-SNAREs on the target membrane. These interactions are proposed to mediate aspects of the specificity of vesicle trafficking and to promote fusion of the lipid bilayers. This chain is Vesicle transport through interaction with t-SNAREs homolog 1B (Vti1b), found in Mus musculus (Mouse).